Here is a 432-residue protein sequence, read N- to C-terminus: Probable D-serine dehydratase (432 aa).

Position 112 is an N6-(pyridoxal phosphate)lysine (lysine 112).

Belongs to the serine/threonine dehydratase family. DsdA subfamily. Requires pyridoxal 5'-phosphate as cofactor.

The enzyme catalyses D-serine = pyruvate + NH4(+). This Pediococcus pentosaceus (strain ATCC 25745 / CCUG 21536 / LMG 10740 / 183-1w) protein is Probable D-serine dehydratase.